The primary structure comprises 654 residues: Acetyl-coenzyme A synthetase (654 aa).

CoA contacts are provided by residues 193–196 (RRGK) and Thr313. Residues 389–391 (GEP), 413–418 (DTWWQT), Asp506, and Arg521 each bind ATP. Ser529 contacts CoA. Arg532 contributes to the ATP binding site. Residues His545 and Val548 each contribute to the Mg(2+) site. Lys619 carries the post-translational modification N6-acetyllysine.

It belongs to the ATP-dependent AMP-binding enzyme family. It depends on Mg(2+) as a cofactor. Post-translationally, acetylated. Deacetylation by the SIR2-homolog deacetylase activates the enzyme.

The enzyme catalyses acetate + ATP + CoA = acetyl-CoA + AMP + diphosphate. Its function is as follows. Catalyzes the conversion of acetate into acetyl-CoA (AcCoA), an essential intermediate at the junction of anabolic and catabolic pathways. AcsA undergoes a two-step reaction. In the first half reaction, AcsA combines acetate with ATP to form acetyl-adenylate (AcAMP) intermediate. In the second half reaction, it can then transfer the acetyl group from AcAMP to the sulfhydryl group of CoA, forming the product AcCoA. In Wolinella succinogenes (strain ATCC 29543 / DSM 1740 / CCUG 13145 / JCM 31913 / LMG 7466 / NCTC 11488 / FDC 602W) (Vibrio succinogenes), this protein is Acetyl-coenzyme A synthetase.